The following is a 596-amino-acid chain: Elongation factor 4 (596 aa).

The 183-residue stretch at 2 to 184 (KHIRNFSIIA…VIVEQIPPPE (183 aa)) folds into the tr-type G domain. Residues 14–19 (DHGKST) and 131–134 (NKID) each bind GTP.

It belongs to the TRAFAC class translation factor GTPase superfamily. Classic translation factor GTPase family. LepA subfamily.

The protein localises to the cell inner membrane. It carries out the reaction GTP + H2O = GDP + phosphate + H(+). Required for accurate and efficient protein synthesis under certain stress conditions. May act as a fidelity factor of the translation reaction, by catalyzing a one-codon backward translocation of tRNAs on improperly translocated ribosomes. Back-translocation proceeds from a post-translocation (POST) complex to a pre-translocation (PRE) complex, thus giving elongation factor G a second chance to translocate the tRNAs correctly. Binds to ribosomes in a GTP-dependent manner. This chain is Elongation factor 4, found in Shewanella piezotolerans (strain WP3 / JCM 13877).